Reading from the N-terminus, the 229-residue chain is Ribonuclease 3 (229 aa).

An RNase III domain is found at 7 to 132 (LRAFESRIGH…VIAAVYLDAG (126 aa)). Residue glutamate 45 coordinates Mg(2+). Aspartate 49 is an active-site residue. 2 residues coordinate Mg(2+): aspartate 118 and glutamate 121. Glutamate 121 is a catalytic residue. The DRBM domain occupies 157–226 (DAKTALQEWA…ARALLARMEA (70 aa)).

The protein belongs to the ribonuclease III family. As to quaternary structure, homodimer. Requires Mg(2+) as cofactor.

Its subcellular location is the cytoplasm. The catalysed reaction is Endonucleolytic cleavage to 5'-phosphomonoester.. Functionally, digests double-stranded RNA. Involved in the processing of primary rRNA transcript to yield the immediate precursors to the large and small rRNAs (23S and 16S). Processes some mRNAs, and tRNAs when they are encoded in the rRNA operon. Processes pre-crRNA and tracrRNA of type II CRISPR loci if present in the organism. The protein is Ribonuclease 3 of Cereibacter sphaeroides (strain ATCC 17025 / ATH 2.4.3) (Rhodobacter sphaeroides).